A 351-amino-acid polypeptide reads, in one-letter code: Phosphoribosylformylglycinamidine cyclo-ligase (351 aa).

It belongs to the AIR synthase family.

It is found in the cytoplasm. It carries out the reaction 2-formamido-N(1)-(5-O-phospho-beta-D-ribosyl)acetamidine + ATP = 5-amino-1-(5-phospho-beta-D-ribosyl)imidazole + ADP + phosphate + H(+). Its pathway is purine metabolism; IMP biosynthesis via de novo pathway; 5-amino-1-(5-phospho-D-ribosyl)imidazole from N(2)-formyl-N(1)-(5-phospho-D-ribosyl)glycinamide: step 2/2. This is Phosphoribosylformylglycinamidine cyclo-ligase from Burkholderia lata (strain ATCC 17760 / DSM 23089 / LMG 22485 / NCIMB 9086 / R18194 / 383).